The following is a 37-amino-acid chain: Large ribosomal subunit protein bL36 (37 aa).

The protein belongs to the bacterial ribosomal protein bL36 family.

This is Large ribosomal subunit protein bL36 from Deinococcus deserti (strain DSM 17065 / CIP 109153 / LMG 22923 / VCD115).